A 250-amino-acid polypeptide reads, in one-letter code: Histone H1.2 (250 aa).

A compositionally biased stretch (polar residues) spans 1 to 11 (MSDSAVATSAS). Disordered stretches follow at residues 1–53 (MSDS…QMVD) and 101–250 (KLIQ…ATKK). The segment covering 27–42 (KKAAATPKSKKSTAAP) has biased composition (low complexity). The H15 domain maps to 44-118 (SHPPTQQMVD…GASGSFKLSR (75 aa)). The segment covering 120-133 (AKKDPKPKASAVEK) has biased composition (basic and acidic residues). Low complexity predominate over residues 151-161 (STSTTKKAAGA). Positions 174-191 (KSVEKKRADKAKAKDAKK) are enriched in basic and acidic residues. The span at 192-211 (TGTIKAKPTTAKAKSSATKP) shows a compositional bias: low complexity. 2 stretches are compositionally biased toward basic residues: residues 212-225 (KTPK…KPKK) and 235-250 (TAVK…ATKK).

The protein belongs to the histone H1/H5 family.

It localises to the nucleus. The protein resides in the chromosome. Its function is as follows. Histones H1 are necessary for the condensation of nucleosome chains into higher-order structures. This chain is Histone H1.2 (His1.2), found in Drosophila virilis (Fruit fly).